A 199-amino-acid chain; its full sequence is ATP-dependent Clp protease proteolytic subunit (199 aa).

Ser98 functions as the Nucleophile in the catalytic mechanism. The active site involves His123.

The protein belongs to the peptidase S14 family. As to quaternary structure, fourteen ClpP subunits assemble into 2 heptameric rings which stack back to back to give a disk-like structure with a central cavity, resembling the structure of eukaryotic proteasomes.

The protein resides in the cytoplasm. The catalysed reaction is Hydrolysis of proteins to small peptides in the presence of ATP and magnesium. alpha-casein is the usual test substrate. In the absence of ATP, only oligopeptides shorter than five residues are hydrolyzed (such as succinyl-Leu-Tyr-|-NHMec, and Leu-Tyr-Leu-|-Tyr-Trp, in which cleavage of the -Tyr-|-Leu- and -Tyr-|-Trp bonds also occurs).. Its function is as follows. Cleaves peptides in various proteins in a process that requires ATP hydrolysis. Has a chymotrypsin-like activity. Plays a major role in the degradation of misfolded proteins. This is ATP-dependent Clp protease proteolytic subunit from Clostridium botulinum (strain Eklund 17B / Type B).